The following is a 240-amino-acid chain: NADH-quinone oxidoreductase subunit I 2 (240 aa).

4Fe-4S ferredoxin-type domains lie at 57 to 86 (TDLR…IEWH) and 97 to 126 (DRFA…MGYD). The [4Fe-4S] cluster site is built by Cys66, Cys69, Cys72, Cys76, Cys106, Cys109, Cys112, and Cys116. Positions 185-240 (IHGYLGRPPLPKGYEPELKPQFRKPAEEAAEAQQAEAAGQPAAEPGKTNGEEAGQP) are disordered. A compositionally biased stretch (basic and acidic residues) spans 198–211 (YEPELKPQFRKPAE). The segment covering 215 to 230 (EAQQAEAAGQPAAEPG) has biased composition (low complexity).

Belongs to the complex I 23 kDa subunit family. As to quaternary structure, NDH-1 is composed of 14 different subunits. Subunits NuoA, H, J, K, L, M, N constitute the membrane sector of the complex. It depends on [4Fe-4S] cluster as a cofactor.

Its subcellular location is the cell membrane. The catalysed reaction is a quinone + NADH + 5 H(+)(in) = a quinol + NAD(+) + 4 H(+)(out). Functionally, NDH-1 shuttles electrons from NADH, via FMN and iron-sulfur (Fe-S) centers, to quinones in the respiratory chain. The immediate electron acceptor for the enzyme in this species is believed to be ubiquinone. Couples the redox reaction to proton translocation (for every two electrons transferred, four hydrogen ions are translocated across the cytoplasmic membrane), and thus conserves the redox energy in a proton gradient. The sequence is that of NADH-quinone oxidoreductase subunit I 2 from Symbiobacterium thermophilum (strain DSM 24528 / JCM 14929 / IAM 14863 / T).